The sequence spans 541 residues: Chaperonin GroEL 1 (541 aa).

ATP contacts are provided by residues 29–32 (TIGP), 86–90 (DGTTT), Gly415, 479–481 (NAA), and Asp495.

The protein belongs to the chaperonin (HSP60) family. In terms of assembly, forms a cylinder of 14 subunits composed of two heptameric rings stacked back-to-back. Interacts with the co-chaperonin GroES.

It is found in the cytoplasm. The enzyme catalyses ATP + H2O + a folded polypeptide = ADP + phosphate + an unfolded polypeptide.. Its function is as follows. Together with its co-chaperonin GroES, plays an essential role in assisting protein folding. The GroEL-GroES system forms a nano-cage that allows encapsulation of the non-native substrate proteins and provides a physical environment optimized to promote and accelerate protein folding. The chain is Chaperonin GroEL 1 from Streptomyces coelicolor (strain ATCC BAA-471 / A3(2) / M145).